A 619-amino-acid chain; its full sequence is Chaperone protein HscA homolog (619 aa).

The protein belongs to the heat shock protein 70 family.

Functionally, chaperone involved in the maturation of iron-sulfur cluster-containing proteins. Has a low intrinsic ATPase activity which is markedly stimulated by HscB. The chain is Chaperone protein HscA homolog from Haemophilus influenzae (strain PittGG).